The primary structure comprises 861 residues: DNA mismatch repair protein MutS (861 aa).

Residue 614–621 participates in ATP binding; the sequence is GPNMGGKS.

The protein belongs to the DNA mismatch repair MutS family.

Its function is as follows. This protein is involved in the repair of mismatches in DNA. It is possible that it carries out the mismatch recognition step. This protein has a weak ATPase activity. This chain is DNA mismatch repair protein MutS, found in Mannheimia succiniciproducens (strain KCTC 0769BP / MBEL55E).